A 248-amino-acid polypeptide reads, in one-letter code: Type II restriction enzyme XhoI (248 aa).

The protein belongs to the XhoI type II restriction endonuclease family.

It catalyses the reaction Endonucleolytic cleavage of DNA to give specific double-stranded fragments with terminal 5'-phosphates.. Functionally, a P subtype restriction enzyme that recognizes the double-stranded sequence 5'-CTCGAG-3' and cleaves after C-1. The polypeptide is Type II restriction enzyme XhoI (Xanthomonas vasicola).